The chain runs to 522 residues: Probable protein kinase UbiB (522 aa).

The 379-residue stretch at 119 to 497 folds into the Protein kinase domain; sequence SFERVPVASA…QRRTNRLLQS (379 aa). ATP is bound by residues 125 to 133 and K151; that span reads VASASIAQV. D286 (proton acceptor) is an active-site residue. The chain crosses the membrane as a helical span at residues 496 to 516; the sequence is QSIIYGGMGFVLGLLALQFLI.

The protein belongs to the ABC1 family. UbiB subfamily.

The protein resides in the cell inner membrane. Its pathway is cofactor biosynthesis; ubiquinone biosynthesis [regulation]. In terms of biological role, is probably a protein kinase regulator of UbiI activity which is involved in aerobic coenzyme Q (ubiquinone) biosynthesis. The polypeptide is Probable protein kinase UbiB (Paracidovorax citrulli (strain AAC00-1) (Acidovorax citrulli)).